Consider the following 238-residue polypeptide: MTDQPVSRTALVLFSGGQDSATCLAWALQRFAHVETLGFDYGQRHAIELDCRDALLAGMTSLRPDWAEKLGEGHTLAIPTLAEISDTALTRNVAIEMGEGGLPNTFVPGRNLVFLTFAAALAYRRGMTDIVGGMCETDYSGYPDCRDDTIKALQTALNLGMDKQFELHTPLMWLDKAATWALAHELGGAGLVDLIREHSHTCYLGERGARHDWGYGCGECPACRLRAKGWCEYVARAV.

14–24 (FSGGQDSATCL) serves as a coordination point for ATP. Positions 202, 217, 220, and 223 each coordinate Zn(2+).

The protein belongs to the QueC family. Requires Zn(2+) as cofactor.

It catalyses the reaction 7-carboxy-7-deazaguanine + NH4(+) + ATP = 7-cyano-7-deazaguanine + ADP + phosphate + H2O + H(+). It participates in purine metabolism; 7-cyano-7-deazaguanine biosynthesis. Catalyzes the ATP-dependent conversion of 7-carboxy-7-deazaguanine (CDG) to 7-cyano-7-deazaguanine (preQ(0)). The protein is 7-cyano-7-deazaguanine synthase of Nitrobacter hamburgensis (strain DSM 10229 / NCIMB 13809 / X14).